A 499-amino-acid polypeptide reads, in one-letter code: Cobyric acid synthase (499 aa).

The GATase cobBQ-type domain maps to 251 to 442 (SLDIAVVSLK…LHGVFDNLEW (192 aa)). Cysteine 332 serves as the catalytic Nucleophile. Residue histidine 434 is part of the active site.

The protein belongs to the CobB/CobQ family. CobQ subfamily.

The protein operates within cofactor biosynthesis; adenosylcobalamin biosynthesis. In terms of biological role, catalyzes amidations at positions B, D, E, and G on adenosylcobyrinic A,C-diamide. NH(2) groups are provided by glutamine, and one molecule of ATP is hydrogenolyzed for each amidation. This chain is Cobyric acid synthase, found in Streptococcus sanguinis (strain SK36).